Reading from the N-terminus, the 237-residue chain is Uridylate kinase (237 aa).

Residue 12–15 (KLSG) participates in ATP binding. The interval 20 to 25 (GEDGLG) is involved in allosteric activation by GTP. G54 is a UMP binding site. ATP-binding residues include G55 and R59. UMP-binding positions include D74 and 135–142 (TGNPFFTT). The ATP site is built by T162, Y168, and D171.

The protein belongs to the UMP kinase family. In terms of assembly, homohexamer.

Its subcellular location is the cytoplasm. It catalyses the reaction UMP + ATP = UDP + ADP. The protein operates within pyrimidine metabolism; CTP biosynthesis via de novo pathway; UDP from UMP (UMPK route): step 1/1. With respect to regulation, allosterically activated by GTP. Inhibited by UTP. In terms of biological role, catalyzes the reversible phosphorylation of UMP to UDP. This Haemophilus influenzae (strain 86-028NP) protein is Uridylate kinase.